We begin with the raw amino-acid sequence, 486 residues long: Membrane-bound lytic murein transglycosylase F (486 aa).

Residues 1–21 (MTRIKLNYFVIGVVALLLALA) form the signal peptide. The segment at 22–268 (LWPNIPWRNG…RLEEKYLGHV (247 aa)) is non-LT domain. The LT domain stretch occupies residues 269-486 (GSFDYVDTKT…VVGPGWSINN (218 aa)). E313 is an active-site residue.

The protein in the N-terminal section; belongs to the bacterial solute-binding protein 3 family. In the C-terminal section; belongs to the transglycosylase Slt family.

Its subcellular location is the cell outer membrane. It carries out the reaction Exolytic cleavage of the (1-&gt;4)-beta-glycosidic linkage between N-acetylmuramic acid (MurNAc) and N-acetylglucosamine (GlcNAc) residues in peptidoglycan, from either the reducing or the non-reducing ends of the peptidoglycan chains, with concomitant formation of a 1,6-anhydrobond in the MurNAc residue.. Its function is as follows. Murein-degrading enzyme that degrades murein glycan strands and insoluble, high-molecular weight murein sacculi, with the concomitant formation of a 1,6-anhydromuramoyl product. Lytic transglycosylases (LTs) play an integral role in the metabolism of the peptidoglycan (PG) sacculus. Their lytic action creates space within the PG sacculus to allow for its expansion as well as for the insertion of various structures such as secretion systems and flagella. The sequence is that of Membrane-bound lytic murein transglycosylase F from Yersinia enterocolitica serotype O:8 / biotype 1B (strain NCTC 13174 / 8081).